We begin with the raw amino-acid sequence, 202 residues long: NADH:(hydroxy)cinnamate reductase subunit CrdA (202 aa).

The protein belongs to the NADH-dependent flavin reductase family. In terms of assembly, NADH:(hydroxy)cinnamate reductase Crd is a heterodimer composed of CrdA and CrdB subunits, encoded by adjacent genes. FMN is required as a cofactor.

Component of the NADH:(hydroxy)cinnamate reductase. CrdA is probably reduced by NADH and then transfers the electrons to the catalytic center of CrdB. Is likely involved in protecting V.ruber from (hydroxy)cinnamate poisoning. The polypeptide is NADH:(hydroxy)cinnamate reductase subunit CrdA (Vibrio ruber (strain DSM 16370 / JCM 11486 / BCRC 17186 / CECT 7878 / LMG 23124 / VR1)).